The primary structure comprises 104 residues: MKFRPLHDRVVVKRIDAEEKTAGGIIIPDTVKEKPSQGEVIAVGPGGRDESGKLIPIDVRVGDRVLFGKWSGTEVKIDTQELLIMKESDIMGVLADVSSKKKAA.

The protein belongs to the GroES chaperonin family. Heptamer of 7 subunits arranged in a ring. Interacts with the chaperonin GroEL.

The protein localises to the cytoplasm. Its function is as follows. Together with the chaperonin GroEL, plays an essential role in assisting protein folding. The GroEL-GroES system forms a nano-cage that allows encapsulation of the non-native substrate proteins and provides a physical environment optimized to promote and accelerate protein folding. GroES binds to the apical surface of the GroEL ring, thereby capping the opening of the GroEL channel. This Bradyrhizobium diazoefficiens (strain JCM 10833 / BCRC 13528 / IAM 13628 / NBRC 14792 / USDA 110) protein is Co-chaperonin GroES 2.